Here is a 465-residue protein sequence, read N- to C-terminus: UPF0422 protein CBU_0937 (465 aa).

The N-terminal stretch at 1 to 23 (MTSKLVISALGLCVSGALSTTLA) is a signal peptide. Residues 28–60 (TTNQQITKRIDYLQAQINELRTQQKKERQKKKA) adopt a coiled-coil conformation.

The protein belongs to the UPF0422 family.

The protein is UPF0422 protein CBU_0937 of Coxiella burnetii (strain RSA 493 / Nine Mile phase I).